We begin with the raw amino-acid sequence, 360 residues long: Pyrimidine monooxygenase RutA (360 aa).

Residues 49–50, Asn115, Glu124, 140–141, and Ser190 contribute to the FMN site; these read IK and RY.

It belongs to the NtaA/SnaA/DszA monooxygenase family. RutA subfamily.

It carries out the reaction uracil + FMNH2 + NADH + O2 = (Z)-3-ureidoacrylate + FMN + NAD(+) + H2O + H(+). The enzyme catalyses thymine + FMNH2 + NADH + O2 = (Z)-2-methylureidoacrylate + FMN + NAD(+) + H2O + H(+). Its function is as follows. Catalyzes the pyrimidine ring opening between N-3 and C-4 by an unusual flavin hydroperoxide-catalyzed mechanism, adding oxygen atoms in the process to yield ureidoacrylate peracid, that immediately reacts with FMN forming ureidoacrylate and FMN-N(5)-oxide. The FMN-N(5)-oxide reacts spontaneously with NADH to produce FMN. Requires the flavin reductase RutF to regenerate FMN in vivo. This chain is Pyrimidine monooxygenase RutA, found in Pseudomonas syringae pv. syringae (strain B728a).